The following is a 319-amino-acid chain: tRNA uridine(34) hydroxylase (319 aa).

Positions 123–221 constitute a Rhodanese domain; sequence GDPDVVVIDT…YLETIPPEQS (99 aa). Cys181 acts as the Cysteine persulfide intermediate in catalysis. The interval 298–319 is disordered; the sequence is ARQQVHIGASPEPKAMPATAGR.

Belongs to the TrhO family.

It carries out the reaction uridine(34) in tRNA + AH2 + O2 = 5-hydroxyuridine(34) in tRNA + A + H2O. In terms of biological role, catalyzes oxygen-dependent 5-hydroxyuridine (ho5U) modification at position 34 in tRNAs. The protein is tRNA uridine(34) hydroxylase of Albidiferax ferrireducens (strain ATCC BAA-621 / DSM 15236 / T118) (Rhodoferax ferrireducens).